A 95-amino-acid polypeptide reads, in one-letter code: Aspartyl/glutamyl-tRNA(Asn/Gln) amidotransferase subunit C (95 aa).

The protein belongs to the GatC family. Heterotrimer of A, B and C subunits.

It carries out the reaction L-glutamyl-tRNA(Gln) + L-glutamine + ATP + H2O = L-glutaminyl-tRNA(Gln) + L-glutamate + ADP + phosphate + H(+). The catalysed reaction is L-aspartyl-tRNA(Asn) + L-glutamine + ATP + H2O = L-asparaginyl-tRNA(Asn) + L-glutamate + ADP + phosphate + 2 H(+). Allows the formation of correctly charged Asn-tRNA(Asn) or Gln-tRNA(Gln) through the transamidation of misacylated Asp-tRNA(Asn) or Glu-tRNA(Gln) in organisms which lack either or both of asparaginyl-tRNA or glutaminyl-tRNA synthetases. The reaction takes place in the presence of glutamine and ATP through an activated phospho-Asp-tRNA(Asn) or phospho-Glu-tRNA(Gln). In Nitrosomonas europaea (strain ATCC 19718 / CIP 103999 / KCTC 2705 / NBRC 14298), this protein is Aspartyl/glutamyl-tRNA(Asn/Gln) amidotransferase subunit C.